A 656-amino-acid chain; its full sequence is Anion exchange transporter (656 aa).

Residues 1 to 75 (MTGAKRKKKS…LAFAVLSSVH (75 aa)) lie on the Cytoplasmic side of the membrane. The helical transmembrane segment at 76–96 (PVFGLYGSLFPAIIYAIFGMG) threads the bilayer. The Extracellular portion of the chain corresponds to 97-144 (HHVATGTFALTSLISANAVERIVPQNMQNLTTQSNTSVLGLSDFEMQR). A helical transmembrane segment spans residues 145–165 (IHVAAAVSFLGGVIQVAMFVL). Residue Gln-166 is a topological domain, cytoplasmic. A helical membrane pass occupies residues 167 to 187 (LGSATFVVTEPVISAMTTGAA). Over 188 to 202 (THVVTSQVKYLLGMK) the chain is Extracellular. A helical transmembrane segment spans residues 203–223 (MPYISGPLGFFYIYAYVFENI). At 224 to 227 (KSVR) the chain is on the cytoplasmic side. Residues 228–248 (LEALLLSLLSIVVLVLVKELN) form a helical membrane-spanning segment. Residues 249–254 (EQFKRK) are Extracellular-facing. A helical transmembrane segment spans residues 255–275 (IKVVLPVDLVLIIAASFACYC). At 276–306 (TNMENTYGLEVVGHIPQGIPSPRAPPMNILS) the chain is on the cytoplasmic side. A helical transmembrane segment spans residues 307–327 (AVITEAFGVALVGYVASLALA). The Extracellular portion of the chain corresponds to 328-343 (QGSAKKFKYSIDDNQE). Residues 344–364 (FLAHGLSNIVSSFFFCIPSAA) form a helical membrane-spanning segment. Residues 365 to 383 (AMGRTAGLYSTGAKTQVAC) are Cytoplasmic-facing. Transmembrane regions (helical) follow at residues 384–404 (LISC…LYWL) and 405–425 (PMCV…IQFR). Residues 426-448 (DLKKYWNVDKIDWGIWVSTYVFT) are Extracellular-facing. A helical transmembrane segment spans residues 449–469 (ICFAANVGLLFGVVCTIAIVI). At 470–656 (GRFPRAMTVS…LSKLSDHSEV (187 aa)) the chain is on the cytoplasmic side. In terms of domain architecture, STAS spans 492–641 (TEMDSETLQQ…ESVSAAISHI (150 aa)). The segment at 641-656 (IHSNKNLSKLSDHSEV) is membrane targeting.

It belongs to the SLC26A/SulP transporter (TC 2.A.53) family. In terms of tissue distribution, expressed in the thyroid gland (at protein level). Expressed in tonsillar high endothelial venule endothelial cells (HEVEC), placenta and in testis, expressed in a subgroup of basal cells in the epididymal ducts.

The protein resides in the basolateral cell membrane. The protein localises to the recycling endosome membrane. It is found in the apical cell membrane. Its subcellular location is the lateral cell membrane. It catalyses the reaction chloride(in) = chloride(out). It carries out the reaction iodide(out) = iodide(in). The enzyme catalyses bromide(in) = bromide(out). The catalysed reaction is oxalate(in) = oxalate(out). It catalyses the reaction nitrate(in) = nitrate(out). It carries out the reaction sulfate(in) = sulfate(out). The enzyme catalyses thiocyanate(in) = thiocyanate(out). The catalysed reaction is D-gluconate(in) = D-gluconate(out). It catalyses the reaction hydrogencarbonate(in) = hydrogencarbonate(out). It carries out the reaction hydrogencarbonate(in) + chloride(out) = hydrogencarbonate(out) + chloride(in). With respect to regulation, is active at both alkaline and acidic pH. Activity is inhibited by 4,4'-Di-isothiocyanatostilbene-2,2'-disulfonic acid (DIDS - an inhibitor of several anion channels and transporters). In terms of biological role, acts as an anion channel mediating the transport of chloride, sulfate and oxalate ions. Mediates the transport of bromide, iodide, nitrate, gluconate, thiocyanate and bicarbonate ions. Its permeability towards bicarbonate is weak and increases when pH is above 7. Mediates thiocyanate transport in retinal pigment epithelium cells. Mediates iodide transport in the thyroid gland, playing an important role in the synthesis of thyroid hormones and the maintenance of thyroid function. Although it is an anion channel, according to PubMed:12736153 and PubMed:32119864 it has been shown to exhibit chloride-bicarbonate exchanger activity. The polypeptide is Anion exchange transporter (Homo sapiens (Human)).